Consider the following 157-residue polypeptide: Vitamin K-dependent protein C (157 aa).

The Peptidase S1 domain maps to 1–157 (EKWELDLDIK…GCGRLHNYGV (157 aa)). A glycan (N-linked (GlcNAc...) asparagine) is linked at asparagine 17. Catalysis depends on aspartate 26, which acts as the Charge relay system. Asparagine 78 carries N-linked (GlcNAc...) asparagine glycosylation. Intrachain disulfides connect cysteine 96/cysteine 110 and cysteine 121/cysteine 149. Catalysis depends on serine 125, which acts as the Charge relay system.

This sequence belongs to the peptidase S1 family. As to expression, plasma; synthesized in the liver.

The protein resides in the secreted. It localises to the golgi apparatus. The protein localises to the endoplasmic reticulum. The enzyme catalyses Degradation of blood coagulation factors Va and VIIIa.. Protein C is a vitamin K-dependent serine protease that regulates blood coagulation by inactivating factors Va and VIIIa in the presence of calcium ions and phospholipids. Exerts a protective effect on the endothelial cell barrier function. This chain is Vitamin K-dependent protein C (PROC), found in Felis catus (Cat).